Consider the following 295-residue polypeptide: MDAEKIHISVLLEETMEFLCLQPGGIYVDGTMGLGGHTSAILERTAPDGRVVAFEWDENAIKASRERLAPYGERLTLVRRNFAEIGVGLTEAGISHIDGLLIDIGLSSLQLDTGTRGFSFQRDDDLDMRMDERGEMTAATIIATCTEEQLADLFYCYGEERQARPIAAAIVAARKLEPIQTTKQLVRVVARAIPKRFHPKKIHVATKVFQALRIAVNTELENLSKIIDDAGEFLKPGSRFCIISFHSLEDRIVKRKFRENPNFKVITNKPVKAGEEELDRNYRSRSALLRVAEKV.

S-adenosyl-L-methionine-binding positions include 35-37, Glu55, Phe82, Asp103, and Gln110; that span reads GGH.

It belongs to the methyltransferase superfamily. RsmH family.

The protein resides in the cytoplasm. The catalysed reaction is cytidine(1402) in 16S rRNA + S-adenosyl-L-methionine = N(4)-methylcytidine(1402) in 16S rRNA + S-adenosyl-L-homocysteine + H(+). Specifically methylates the N4 position of cytidine in position 1402 (C1402) of 16S rRNA. The chain is Ribosomal RNA small subunit methyltransferase H from Desulfotalea psychrophila (strain LSv54 / DSM 12343).